The chain runs to 418 residues: Glutamyl-tRNA reductase (418 aa).

Substrate contacts are provided by residues 49-52 (TCNR), serine 105, 110-112 (EPQ), and glutamine 116. Cysteine 50 acts as the Nucleophile in catalysis. NADP(+) is bound at residue 185–190 (GAGEMI).

The protein belongs to the glutamyl-tRNA reductase family. In terms of assembly, homodimer.

It catalyses the reaction (S)-4-amino-5-oxopentanoate + tRNA(Glu) + NADP(+) = L-glutamyl-tRNA(Glu) + NADPH + H(+). Its pathway is porphyrin-containing compound metabolism; protoporphyrin-IX biosynthesis; 5-aminolevulinate from L-glutamyl-tRNA(Glu): step 1/2. In terms of biological role, catalyzes the NADPH-dependent reduction of glutamyl-tRNA(Glu) to glutamate 1-semialdehyde (GSA). The sequence is that of Glutamyl-tRNA reductase from Aromatoleum aromaticum (strain DSM 19018 / LMG 30748 / EbN1) (Azoarcus sp. (strain EbN1)).